The primary structure comprises 638 residues: Threonine--tRNA ligase (638 aa).

A TGS domain is found at 1–61; it reads MVAITLPDGK…DRDVNLSIIT (61 aa). The interval 244–536 is catalytic; it reads DHRRLGREME…LIENFAGRFP (293 aa). The Zn(2+) site is built by Cys336, His387, and His513.

This sequence belongs to the class-II aminoacyl-tRNA synthetase family. Homodimer. Zn(2+) is required as a cofactor.

Its subcellular location is the cytoplasm. The enzyme catalyses tRNA(Thr) + L-threonine + ATP = L-threonyl-tRNA(Thr) + AMP + diphosphate + H(+). Catalyzes the attachment of threonine to tRNA(Thr) in a two-step reaction: L-threonine is first activated by ATP to form Thr-AMP and then transferred to the acceptor end of tRNA(Thr). Also edits incorrectly charged L-seryl-tRNA(Thr). This chain is Threonine--tRNA ligase, found in Paramagnetospirillum magneticum (strain ATCC 700264 / AMB-1) (Magnetospirillum magneticum).